A 322-amino-acid chain; its full sequence is HPr kinase/phosphorylase (322 aa).

Active-site residues include His-143 and Lys-164. 158 to 165 (GRSGVGKS) contacts ATP. Ser-165 lines the Mg(2+) pocket. The active-site Proton acceptor; for phosphorylation activity. Proton donor; for dephosphorylation activity is the Asp-182. Positions 206–215 (MEIRGLGILN) are important for the catalytic mechanism of both phosphorylation and dephosphorylation. Mg(2+) is bound at residue Glu-207. Arg-250 is a catalytic residue. An important for the catalytic mechanism of dephosphorylation region spans residues 271-276 (PVKPGR).

It belongs to the HPrK/P family. Homohexamer. It depends on Mg(2+) as a cofactor.

It catalyses the reaction [HPr protein]-L-serine + ATP = [HPr protein]-O-phospho-L-serine + ADP + H(+). The catalysed reaction is [HPr protein]-O-phospho-L-serine + phosphate + H(+) = [HPr protein]-L-serine + diphosphate. Its function is as follows. Catalyzes the ATP- as well as the pyrophosphate-dependent phosphorylation of a specific serine residue in HPr, a phosphocarrier protein of the phosphoenolpyruvate-dependent sugar phosphotransferase system (PTS). HprK/P also catalyzes the pyrophosphate-producing, inorganic phosphate-dependent dephosphorylation (phosphorolysis) of seryl-phosphorylated HPr (P-Ser-HPr). The protein is HPr kinase/phosphorylase of Leptospira biflexa serovar Patoc (strain Patoc 1 / Ames).